The following is a 108-amino-acid chain: Peptidyl-prolyl cis-trans isomerase FKBP1B (108 aa).

Residues 20–108 (GQTCVVHYTG…IFGVELLNLE (89 aa)) form the PPIase FKBP-type domain.

The protein belongs to the FKBP-type PPIase family. FKBP1 subfamily. Identified in a complex composed of RYR2, FKBP1B, PKA catalytic subunit, PRKAR2A, AKAP6, and the protein phosphatases PP2A and PP1. Interacts directly with RYR2.

It is found in the cytoplasm. The protein resides in the sarcoplasmic reticulum. It catalyses the reaction [protein]-peptidylproline (omega=180) = [protein]-peptidylproline (omega=0). With respect to regulation, inhibited by both FK506 and rapamycin. Has the potential to contribute to the immunosuppressive and toxic effects of FK506 and rapamycin. PPIases accelerate the folding of proteins. It catalyzes the cis-trans isomerization of proline imidic peptide bonds in oligopeptides. This chain is Peptidyl-prolyl cis-trans isomerase FKBP1B (FKBP1B), found in Oryctolagus cuniculus (Rabbit).